The sequence spans 68 residues: uncharacterized protein (68 aa).

This is an uncharacterized protein from Caenorhabditis elegans.